The chain runs to 206 residues: Ribosomal RNA small subunit methyltransferase G (206 aa).

Residues glycine 74, leucine 79, 125-126 (VE), and arginine 140 contribute to the S-adenosyl-L-methionine site.

Belongs to the methyltransferase superfamily. RNA methyltransferase RsmG family.

The protein localises to the cytoplasm. It carries out the reaction guanosine(527) in 16S rRNA + S-adenosyl-L-methionine = N(7)-methylguanosine(527) in 16S rRNA + S-adenosyl-L-homocysteine. Specifically methylates the N7 position of guanine in position 527 of 16S rRNA. In Shewanella sp. (strain ANA-3), this protein is Ribosomal RNA small subunit methyltransferase G.